A 1097-amino-acid chain; its full sequence is Protein STICHEL-like 3 (1097 aa).

5 disordered regions span residues 1-22 (MTTT…NNRI), 74-168 (SLRD…YRIG), 220-293 (NVRP…GFGE), 321-358 (GRSL…DSSS), and 400-436 (DSDL…LTEK). Positions 10-20 (RVASSSSTRNN) are enriched in polar residues. The segment covering 95 to 113 (LPKKGDLVEGGRRSVDLKK) has biased composition (basic and acidic residues). Over residues 126–136 (PVVNFGTSKVT) the composition is skewed to polar residues. Positions 137 to 168 (PSDERSGPVSGERDSGRRVKREESSRKSYRIG) are enriched in basic and acidic residues. The segment covering 227–241 (YGGGGGGGNTRGCAG) has biased composition (gly residues). The segment covering 245–259 (RPKRRKFRGTRRVRG) has biased composition (basic residues). 2 stretches are compositionally biased toward basic and acidic residues: residues 281 to 291 (VEKHDGEKEGF) and 332 to 345 (KGGR…RNGS). Residues 346–358 (DKMMIQSDDDSSS) are compositionally biased toward low complexity. Positions 411 to 429 (EKKHKKKSHVNARHRHRQQ) are enriched in basic residues. An ATP-binding site is contributed by 472 to 479 (GPNGTGKT). Zn(2+)-binding residues include cysteine 491, cysteine 500, cysteine 503, and cysteine 506. Residues 742 to 770 (KEDMEKLRQALKTLSEAEKQLRVSNDKLT) are a coiled coil. 3 disordered regions span residues 790–828 (SSTA…DSRK), 913–932 (DPRN…DKSL), and 956–1003 (VTES…SQSI). 2 stretches are compositionally biased toward basic and acidic residues: residues 796–807 (GGRESSDHHLDP) and 818–828 (GLDRRRGDSRK). A compositionally biased stretch (polar residues) spans 993-1003 (ASQSQNQSQSI).

It belongs to the DnaX/STICHEL family.

This chain is Protein STICHEL-like 3, found in Arabidopsis thaliana (Mouse-ear cress).